A 772-amino-acid polypeptide reads, in one-letter code: Semaphorin-3A (772 aa).

The signal sequence occupies residues 1 to 20 (MGWFTGIACLFWGILLTARA). In terms of domain architecture, Sema spans 31–514 (RLKLSYKEML…STAGVAQLPL (484 aa)). N53 carries an N-linked (GlcNAc...) asparagine glycan. C103 and C114 are oxidised to a cystine. N125 is a glycosylation site (N-linked (GlcNAc...) asparagine). 4 disulfide bridges follow: C132–C141, C269–C381, C293–C341, and C517–C535. The Ig-like C2-type domain occupies 577–665 (HGHSLEERII…GFMQTLLKVT (89 aa)). The N-linked (GlcNAc...) asparagine glycan is linked to N591. C650 and C723 are joined by a disulfide. Residues 677–691 (LLHKDDDGDGSKTKE) are compositionally biased toward basic and acidic residues. Disordered stretches follow at residues 677–698 (LLHK…SMTP) and 729–772 (RDRK…PRSV). Positions 729–738 (RDRKQRRQRP) are enriched in basic residues. The segment covering 750–772 (HMQESKKGRNRRTHEFERAPRSV) has biased composition (basic and acidic residues).

Belongs to the semaphorin family. In terms of assembly, interacts with PLXND1. Expressed in the dorsal root ganglia.

It localises to the secreted. May be involved in guiding growing axons towards their targets by forming a molecular boundary that instructs axons to engage in the formation of specific nerve tracts. Binds to neuropilin. Involved in the development of the olfactory system and in neuronal control of puberty. The sequence is that of Semaphorin-3A (Sema3a) from Rattus norvegicus (Rat).